The chain runs to 322 residues: MLDKIWYRSKPNLLSRVLQPISLVFIDIANKRKIKQQLKQYKSKIPIIVVGNISVGGTGKTPVVRMLAQQYLAQDKKPAIISRGYGAKADNYPFEVTSGTLATQCGDEPAMLFDALQAQVPIVIAPERVQAVKYIEKNFPDTDIIMSDDGLQHYKLARDKEIVVVDAIRMFGNKLCLPAGPLREPIERLKEVDQIIVIGNCSDKDKELLKNYKNVTYAKVVATEFVNILTAKKVAKTEFNHQNAIAIAGIGNPTKFFKTLEESAINITAKKVFKDHHKFTQSDFEGIDSDITVVMTYKDAIKCKNFAKANWWYLDIALDINV.

54–61 (SVGGTGKT) contributes to the ATP binding site.

The protein belongs to the LpxK family.

The catalysed reaction is a lipid A disaccharide + ATP = a lipid IVA + ADP + H(+). Its pathway is glycolipid biosynthesis; lipid IV(A) biosynthesis; lipid IV(A) from (3R)-3-hydroxytetradecanoyl-[acyl-carrier-protein] and UDP-N-acetyl-alpha-D-glucosamine: step 6/6. Functionally, transfers the gamma-phosphate of ATP to the 4'-position of a tetraacyldisaccharide 1-phosphate intermediate (termed DS-1-P) to form tetraacyldisaccharide 1,4'-bis-phosphate (lipid IVA). This chain is Tetraacyldisaccharide 4'-kinase, found in Francisella tularensis subsp. tularensis (strain FSC 198).